A 223-amino-acid polypeptide reads, in one-letter code: Phosphoribosylformylglycinamidine synthase subunit PurQ (223 aa).

The Glutamine amidotransferase type-1 domain occupies 3–223; that stretch reads FAVLVFPGSN…MVKSWREQHV (221 aa). The Nucleophile role is filled by Cys-85. Catalysis depends on residues His-193 and Glu-195.

Part of the FGAM synthase complex composed of 1 PurL, 1 PurQ and 2 PurS subunits.

The protein localises to the cytoplasm. The enzyme catalyses N(2)-formyl-N(1)-(5-phospho-beta-D-ribosyl)glycinamide + L-glutamine + ATP + H2O = 2-formamido-N(1)-(5-O-phospho-beta-D-ribosyl)acetamidine + L-glutamate + ADP + phosphate + H(+). It carries out the reaction L-glutamine + H2O = L-glutamate + NH4(+). Its pathway is purine metabolism; IMP biosynthesis via de novo pathway; 5-amino-1-(5-phospho-D-ribosyl)imidazole from N(2)-formyl-N(1)-(5-phospho-D-ribosyl)glycinamide: step 1/2. Its function is as follows. Part of the phosphoribosylformylglycinamidine synthase complex involved in the purines biosynthetic pathway. Catalyzes the ATP-dependent conversion of formylglycinamide ribonucleotide (FGAR) and glutamine to yield formylglycinamidine ribonucleotide (FGAM) and glutamate. The FGAM synthase complex is composed of three subunits. PurQ produces an ammonia molecule by converting glutamine to glutamate. PurL transfers the ammonia molecule to FGAR to form FGAM in an ATP-dependent manner. PurS interacts with PurQ and PurL and is thought to assist in the transfer of the ammonia molecule from PurQ to PurL. The chain is Phosphoribosylformylglycinamidine synthase subunit PurQ from Staphylococcus aureus (strain MSSA476).